A 192-amino-acid polypeptide reads, in one-letter code: Elongation factor P (192 aa).

Belongs to the elongation factor P family.

The protein localises to the cytoplasm. The protein operates within protein biosynthesis; polypeptide chain elongation. Functionally, involved in peptide bond synthesis. Stimulates efficient translation and peptide-bond synthesis on native or reconstituted 70S ribosomes in vitro. Probably functions indirectly by altering the affinity of the ribosome for aminoacyl-tRNA, thus increasing their reactivity as acceptors for peptidyl transferase. This is Elongation factor P from Borrelia duttonii (strain Ly).